We begin with the raw amino-acid sequence, 221 residues long: Thiamine-phosphate synthase (221 aa).

4-amino-2-methyl-5-(diphosphooxymethyl)pyrimidine-binding positions include 46–50 and Asn-83; that span reads QFREK. Asp-84 and Asp-103 together coordinate Mg(2+). Ser-122 serves as a coordination point for 4-amino-2-methyl-5-(diphosphooxymethyl)pyrimidine. Residue 149–151 coordinates 2-[(2R,5Z)-2-carboxy-4-methylthiazol-5(2H)-ylidene]ethyl phosphate; it reads TQS. Lys-152 contacts 4-amino-2-methyl-5-(diphosphooxymethyl)pyrimidine. Residues Gly-181 and 201-202 contribute to the 2-[(2R,5Z)-2-carboxy-4-methylthiazol-5(2H)-ylidene]ethyl phosphate site; that span reads IS.

This sequence belongs to the thiamine-phosphate synthase family. The cofactor is Mg(2+).

It catalyses the reaction 2-[(2R,5Z)-2-carboxy-4-methylthiazol-5(2H)-ylidene]ethyl phosphate + 4-amino-2-methyl-5-(diphosphooxymethyl)pyrimidine + 2 H(+) = thiamine phosphate + CO2 + diphosphate. The enzyme catalyses 2-(2-carboxy-4-methylthiazol-5-yl)ethyl phosphate + 4-amino-2-methyl-5-(diphosphooxymethyl)pyrimidine + 2 H(+) = thiamine phosphate + CO2 + diphosphate. The catalysed reaction is 4-methyl-5-(2-phosphooxyethyl)-thiazole + 4-amino-2-methyl-5-(diphosphooxymethyl)pyrimidine + H(+) = thiamine phosphate + diphosphate. It participates in cofactor biosynthesis; thiamine diphosphate biosynthesis; thiamine phosphate from 4-amino-2-methyl-5-diphosphomethylpyrimidine and 4-methyl-5-(2-phosphoethyl)-thiazole: step 1/1. In terms of biological role, condenses 4-methyl-5-(beta-hydroxyethyl)thiazole monophosphate (THZ-P) and 2-methyl-4-amino-5-hydroxymethyl pyrimidine pyrophosphate (HMP-PP) to form thiamine monophosphate (TMP). This is Thiamine-phosphate synthase from Actinobacillus succinogenes (strain ATCC 55618 / DSM 22257 / CCUG 43843 / 130Z).